We begin with the raw amino-acid sequence, 579 residues long: Potassium-transporting ATPase potassium-binding subunit (579 aa).

10 helical membrane-spanning segments follow: residues 1–21 (MISN…ACVV), 64–84 (HYAL…YGLQ), 135–155 (GLTV…IGLI), 178–198 (IYIL…QGVV), 265–285 (FLEL…FGLM), 293–313 (WAIL…AVSA), 398–418 (GLYG…LMVG), 435–455 (MAAL…AIAV), 503–523 (WLGI…LAIA), and 549–569 (LLIG…LALG).

Belongs to the KdpA family. As to quaternary structure, the system is composed of three essential subunits: KdpA, KdpB and KdpC.

Its subcellular location is the cell membrane. Its function is as follows. Part of the high-affinity ATP-driven potassium transport (or Kdp) system, which catalyzes the hydrolysis of ATP coupled with the electrogenic transport of potassium into the cytoplasm. This subunit binds the extracellular potassium ions and delivers the ions to the membrane domain of KdpB through an intramembrane tunnel. The polypeptide is Potassium-transporting ATPase potassium-binding subunit (Herpetosiphon aurantiacus (strain ATCC 23779 / DSM 785 / 114-95)).